The chain runs to 265 residues: Orotidine 5'-phosphate decarboxylase (265 aa).

Substrate is bound by residues D37, 59–61, 91–100, Y217, and R235; these read KTH and DRKFADIGNT. The active-site Proton donor is K93.

The protein belongs to the OMP decarboxylase family.

It carries out the reaction orotidine 5'-phosphate + H(+) = UMP + CO2. Its pathway is pyrimidine metabolism; UMP biosynthesis via de novo pathway; UMP from orotate: step 2/2. This Candida glabrata (strain ATCC 2001 / BCRC 20586 / JCM 3761 / NBRC 0622 / NRRL Y-65 / CBS 138) (Yeast) protein is Orotidine 5'-phosphate decarboxylase (URA3).